We begin with the raw amino-acid sequence, 158 residues long: 2-C-methyl-D-erythritol 2,4-cyclodiphosphate synthase (158 aa).

A divalent metal cation is bound by residues D9 and H11. 4-CDP-2-C-methyl-D-erythritol 2-phosphate-binding positions include 9 to 11 (DVH) and 35 to 36 (HS). H43 provides a ligand contact to a divalent metal cation. 4-CDP-2-C-methyl-D-erythritol 2-phosphate is bound by residues 57 to 59 (DIG), 62 to 66 (FPDTD), 133 to 136 (TTSE), F140, and R143.

The protein belongs to the IspF family. As to quaternary structure, homotrimer. A divalent metal cation serves as cofactor.

The catalysed reaction is 4-CDP-2-C-methyl-D-erythritol 2-phosphate = 2-C-methyl-D-erythritol 2,4-cyclic diphosphate + CMP. It participates in isoprenoid biosynthesis; isopentenyl diphosphate biosynthesis via DXP pathway; isopentenyl diphosphate from 1-deoxy-D-xylulose 5-phosphate: step 4/6. Involved in the biosynthesis of isopentenyl diphosphate (IPP) and dimethylallyl diphosphate (DMAPP), two major building blocks of isoprenoid compounds. Catalyzes the conversion of 4-diphosphocytidyl-2-C-methyl-D-erythritol 2-phosphate (CDP-ME2P) to 2-C-methyl-D-erythritol 2,4-cyclodiphosphate (ME-CPP) with a corresponding release of cytidine 5-monophosphate (CMP). The chain is 2-C-methyl-D-erythritol 2,4-cyclodiphosphate synthase from Pasteurella multocida (strain Pm70).